Consider the following 147-residue polypeptide: Hemoglobin subunit beta-Y (147 aa).

Positions 3–147 (HFTAEEKAAI…VANALSLKYH (145 aa)) constitute a Globin domain. Residues His-64 and His-93 each contribute to the heme b site.

It belongs to the globin family. As to quaternary structure, heterotetramer of two alpha chains and two beta chains.

Functionally, this is a minor early embryonic beta chain. This is Hemoglobin subunit beta-Y (HBBY) from Mesocricetus auratus (Golden hamster).